The chain runs to 168 residues: Protein-export protein SecB (168 aa).

It belongs to the SecB family. As to quaternary structure, homotetramer, a dimer of dimers. One homotetramer interacts with 1 SecA dimer.

The protein localises to the cytoplasm. One of the proteins required for the normal export of preproteins out of the cell cytoplasm. It is a molecular chaperone that binds to a subset of precursor proteins, maintaining them in a translocation-competent state. It also specifically binds to its receptor SecA. The polypeptide is Protein-export protein SecB (Saccharophagus degradans (strain 2-40 / ATCC 43961 / DSM 17024)).